We begin with the raw amino-acid sequence, 259 residues long: O-antigen export system permease protein RfbA (259 aa).

A run of 6 helical transmembrane segments spans residues 33 to 53 (FGYL…YFIF), 73 to 95 (FPWQ…NAQI), 111 to 131 (VMME…FLFV), 142 to 162 (WGIP…SIIF), 176 to 196 (VSLG…SDMI), and 228 to 248 (EYIS…LAIF). An ABC transmembrane type-2 domain is found at 33-251 (FGYLWSIANP…IVGLAIFNKL (219 aa)).

This sequence belongs to the ABC-2 integral membrane protein family.

The protein resides in the cell inner membrane. Its function is as follows. May form an ATP-driven O-antigen export apparatus, in association with RfbB. The protein is O-antigen export system permease protein RfbA (rfbA) of Klebsiella pneumoniae.